A 284-amino-acid polypeptide reads, in one-letter code: 2-dehydro-3-deoxyphosphooctonate aldolase (284 aa).

Belongs to the KdsA family.

The protein resides in the cytoplasm. It carries out the reaction D-arabinose 5-phosphate + phosphoenolpyruvate + H2O = 3-deoxy-alpha-D-manno-2-octulosonate-8-phosphate + phosphate. Its pathway is carbohydrate biosynthesis; 3-deoxy-D-manno-octulosonate biosynthesis; 3-deoxy-D-manno-octulosonate from D-ribulose 5-phosphate: step 2/3. It participates in bacterial outer membrane biogenesis; lipopolysaccharide biosynthesis. The protein is 2-dehydro-3-deoxyphosphooctonate aldolase of Salmonella arizonae (strain ATCC BAA-731 / CDC346-86 / RSK2980).